Consider the following 314-residue polypeptide: Mycothiol acetyltransferase (314 aa).

Glu39 provides a ligand contact to 1D-myo-inositol 2-(L-cysteinylamino)-2-deoxy-alpha-D-glucopyranoside. Leu80–Ala82 is an acetyl-CoA binding site. Residues Phe159 to Pro313 enclose the N-acetyltransferase domain. 1D-myo-inositol 2-(L-cysteinylamino)-2-deoxy-alpha-D-glucopyranoside-binding residues include Glu186, Lys228, and Glu237. Acetyl-CoA is bound by residues Leu241–Val243 and Gln248–Arg254. Residue Tyr275 coordinates 1D-myo-inositol 2-(L-cysteinylamino)-2-deoxy-alpha-D-glucopyranoside.

The protein belongs to the acetyltransferase family. MshD subfamily. In terms of assembly, monomer.

It catalyses the reaction 1D-myo-inositol 2-(L-cysteinylamino)-2-deoxy-alpha-D-glucopyranoside + acetyl-CoA = mycothiol + CoA + H(+). Its function is as follows. Catalyzes the transfer of acetyl from acetyl-CoA to desacetylmycothiol (Cys-GlcN-Ins) to form mycothiol. The chain is Mycothiol acetyltransferase from Jonesia denitrificans (strain ATCC 14870 / DSM 20603 / BCRC 15368 / CIP 55.134 / JCM 11481 / NBRC 15587 / NCTC 10816 / Prevot 55134) (Listeria denitrificans).